Reading from the N-terminus, the 205-residue chain is Small ribosomal subunit protein uS4 (205 aa).

An S4 RNA-binding domain is found at 94–157 (SRLDTVVYRM…KQIPLIQESV (64 aa)).

It belongs to the universal ribosomal protein uS4 family. Part of the 30S ribosomal subunit. Contacts protein S5. The interaction surface between S4 and S5 is involved in control of translational fidelity.

Its function is as follows. One of the primary rRNA binding proteins, it binds directly to 16S rRNA where it nucleates assembly of the body of the 30S subunit. With S5 and S12 plays an important role in translational accuracy. The polypeptide is Small ribosomal subunit protein uS4 (Rickettsia conorii (strain ATCC VR-613 / Malish 7)).